A 318-amino-acid polypeptide reads, in one-letter code: NLP effector protein 9 (318 aa).

A signal peptide spans 1 to 19; it reads MRLFAFLWSSVAFLSTVQA. The segment covering 24-35 has biased composition (low complexity); it reads TASQTQDDSSTP. 2 disordered regions span residues 24 to 43 and 50 to 93; these read TASQ…PDKY and LRTK…PAPT. Polar residues predominate over residues 55-65; it reads PMATPNRTIMP. N60 carries N-linked (GlcNAc...) asparagine glycosylation. Over residues 73 to 93 the composition is skewed to pro residues; that stretch reads PEPPTPEPTYLPTLSPTPAPT. Residues 185–195 carry the Conserved undecapeptide motif I motif; that stretch reads AIMYSWYFPKD. A Hepta-peptide GHRHDWE motif II motif is present at residues 202-208; it reads GHRHDWE.

Belongs to the Necrosis inducing protein (NPP1) family.

It localises to the secreted. Functionally, secreted effector that contributes to virulence during infection by P.capsici. Induces distinct chlorosis at 3 days after inoculation of host C.annuum leaves, and all the chlorotic areas gradually turn brown and become moderately necrotic at 7 days after inoculation. Caused only small necrotic areas at 7 days after non-host N.benthamiana leaves infection. The sequence is that of NLP effector protein 9 from Phytophthora capsici.